Consider the following 471-residue polypeptide: UDP-N-acetylmuramate--L-alanine ligase (471 aa).

Residue 114 to 120 participates in ATP binding; it reads GTHGKTT.

Belongs to the MurCDEF family.

It localises to the cytoplasm. It catalyses the reaction UDP-N-acetyl-alpha-D-muramate + L-alanine + ATP = UDP-N-acetyl-alpha-D-muramoyl-L-alanine + ADP + phosphate + H(+). Its pathway is cell wall biogenesis; peptidoglycan biosynthesis. Cell wall formation. This chain is UDP-N-acetylmuramate--L-alanine ligase, found in Methylobacterium sp. (strain 4-46).